A 1029-amino-acid chain; its full sequence is Protein STABILIZED1 (1029 aa).

The 85-residue stretch at 1–85 folds into the Ubiquitin-like domain; it reads MVFLSIPNGK…VIIHVLLLGG (85 aa). G85 participates in a covalent cross-link: Glycyl lysine isopeptide (Gly-Lys) (interchain with K-? in acceptor proteins). The segment at 142 to 170 is disordered; that stretch reads AAPGVGRGAGKPSEAEAEDDEEAEEKRYD. The stretch at 210 to 243 forms a coiled coil; the sequence is DSRRKDRREAKLKEEIEKYRASNPKITEQFADLK. 15 HAT repeats span residues 367 to 399, 401 to 431, 432 to 462, 463 to 494, 496 to 524, 526 to 554, 639 to 671, 673 to 705, 707 to 739, 741 to 772, 774 to 806, 808 to 840, 842 to 874, 876 to 908, and 940 to 972; these read YDRNRARLLYKSLTQSNPKNPNGWIAAARVEEV, GKIKAARFQIQRGCEECPKNEDVWLEACRLA, NPEDAKGVIAKGVKLIPNSVKLWLEAAKLEH, DVENKSRVLRKGLEHIPDSVRLWKAVVELANE, DARILLHRAVECCPLHLELWVALARLETY, ESKKVLNKAREKLPKEPAIWITAAKLEEA, GSIETARAIYAHALSVFLTKKSIWLKAAQLEKS, GSRESLDALLRKAVTYVPQAEVLWLMGAKEKWL, GDVPAARAILQEAYAAIPNSEEIWLAAFKLEFE, KEPERARMLLAKARERGGTERVWMKSAIVERE, GNVEEERRLLNEGLKQFPTFFKLWLMLGQLEER, KHLEQARKAYDTGLKHCPHCIPLWLSLADLEEK, NGLNKARAILTTARKKNPGGAELWLAAIRAELR, DNKREAEHLMSKALQDCPKSGILWAADIEMAPR, and KKVEKARAWFERAVTVGPDIGDFWALFYKFELQ. Residues 625–658 form a TPR 1 repeat; that stretch reads KRTWVADADECKKRGSIETARAIYAHALSVFLTK. One copy of the TPR 2 repeat lies at 794 to 827; sequence FKLWLMLGQLEERFKHLEQARKAYDTGLKHCPHC. One copy of the TPR 3 repeat lies at 926–959; the sequence is PHVTIAVAKLFWQDKKVEKARAWFERAVTVGPDI.

In terms of assembly, component of a pre-mRNA splicing complex. Interacts with ZOP1. Interacts with PRP31. Ubiquitous.

The protein localises to the nucleus. It is found in the cajal body. Its function is as follows. Pre-mRNA splicing factor required for splicing and for the turnover of unstable transcripts. May be a U5 snRNP-associated protein involved in the formation of U4/U6-U5 tri-snRNP. Involved in responses to abiotic stresses. Involved in microRNAs (miRNAs) biogenesis by functioning in primary miRNAs (pri-miRNAs) splicing. Required for DNA methylation and transcriptional silencing through the RNA-directed DNA methylation (RdDM) pathway. This is Protein STABILIZED1 (STA1) from Arabidopsis thaliana (Mouse-ear cress).